Here is a 254-residue protein sequence, read N- to C-terminus: 4-hydroxy-tetrahydrodipicolinate reductase (254 aa).

Glycine 7–isoleucine 12 serves as a coordination point for NAD(+). Position 35 (arginine 35) interacts with NADP(+). Residues glycine 91–threonine 93 and alanine 115–methionine 118 each bind NAD(+). Histidine 147 (proton donor/acceptor) is an active-site residue. Histidine 148 contacts (S)-2,3,4,5-tetrahydrodipicolinate. The active-site Proton donor is the lysine 151. Glycine 157–threonine 158 contacts (S)-2,3,4,5-tetrahydrodipicolinate.

The protein belongs to the DapB family.

It is found in the cytoplasm. It carries out the reaction (S)-2,3,4,5-tetrahydrodipicolinate + NAD(+) + H2O = (2S,4S)-4-hydroxy-2,3,4,5-tetrahydrodipicolinate + NADH + H(+). The catalysed reaction is (S)-2,3,4,5-tetrahydrodipicolinate + NADP(+) + H2O = (2S,4S)-4-hydroxy-2,3,4,5-tetrahydrodipicolinate + NADPH + H(+). Its pathway is amino-acid biosynthesis; L-lysine biosynthesis via DAP pathway; (S)-tetrahydrodipicolinate from L-aspartate: step 4/4. Its function is as follows. Catalyzes the conversion of 4-hydroxy-tetrahydrodipicolinate (HTPA) to tetrahydrodipicolinate. This chain is 4-hydroxy-tetrahydrodipicolinate reductase, found in Helicobacter pylori (strain ATCC 700392 / 26695) (Campylobacter pylori).